An 88-amino-acid chain; its full sequence is KTx type I (88 aa).

A signal peptide spans 1–19; it reads MKTTLVVVVLACIVALTSA. The ShKT domain occupies 54-88; the sequence is CKDVLSEFSCGVLKKDGQCNKADIQAKCKLTCDKC. 3 disulfides stabilise this stretch: Cys-54-Cys-88, Cys-63-Cys-81, and Cys-72-Cys-85.

It belongs to the sea anemone type 1 potassium channel toxin family. In terms of tissue distribution, expressed both outside and in acontia, a specialised envenomation structure laden with batteries of venom-containing nematocysts found only in the superfamily Metridioidea.

It is found in the secreted. The protein resides in the nematocyst. Functionally, inhibits voltage-gated potassium channels (Kv1/KCNA). The sequence is that of KTx type I from Calliactis polypus (Hermit crab anemone).